A 665-amino-acid chain; its full sequence is Methionine--tRNA ligase (665 aa).

The 'HIGH' region signature appears at tyrosine 13–serine 23. The 'KMSKS' region motif lies at lysine 309 to serine 313. Lysine 312 contacts ATP. A tRNA-binding domain is found at aspartate 562 to glycine 665.

The protein belongs to the class-I aminoacyl-tRNA synthetase family. MetG type 2B subfamily. Homodimer.

It is found in the cytoplasm. The enzyme catalyses tRNA(Met) + L-methionine + ATP = L-methionyl-tRNA(Met) + AMP + diphosphate. Is required not only for elongation of protein synthesis but also for the initiation of all mRNA translation through initiator tRNA(fMet) aminoacylation. The chain is Methionine--tRNA ligase (metG) from Streptococcus pneumoniae serotype 4 (strain ATCC BAA-334 / TIGR4).